The following is a 301-amino-acid chain: Syntaxin-17 (301 aa).

N-acetylserine is present on Ser-2. Topologically, residues 2-227 (SEDEEKVKLR…KNLQKAAKYK (226 aa)) are cytoplasmic. Lys-41 is subject to N6-acetyllysine. Positions 49–128 (DKLHEEHINA…QVKNEEALLQ (80 aa)) form a coiled coil. Residue Tyr-156 is modified to Phosphotyrosine; by ABL1. Residues 161–223 (IPRDQNAAES…EEGTKNLQKA (63 aa)) form the t-SNARE coiled-coil homology domain. Residues 228 to 248 (LAALPVAGAVIGGVVGGPIGL) traverse the membrane as a helical segment. The segment at 228 to 274 (LAALPVAGAVIGGVVGGPIGLLAGFKVAGIAAALGGGVLGFTGGKLI) is necessary and sufficient for localization to autophagosome. Topologically, residues 249-253 (LAGFK) are lumenal. Residues 254–274 (VAGIAAALGGGVLGFTGGKLI) traverse the membrane as a helical segment. Positions 273-301 (LIQRRKQKMMEKLTSSCPDLPSQSDKKCS) are required for interaction with COPB1, TMED9 and TMED10. Topologically, residues 275–301 (QRRKQKMMEKLTSSCPDLPSQSDKKCS) are cytoplasmic. Ser-288 carries the phosphoserine modification. Residues 298–301 (KKCS) carry the Endoplasmic reticulum retention signal motif.

Belongs to the syntaxin family. As to quaternary structure, forms a SNARE complex composed of VAMP8, SNAP29 and STX17 involved in fusion of autophagosome with lysosome. May interact with VAMP7. May interact with VTI1B. Probably interacts with BET1, SCFD1 and SEC22B. Interacts with PTPN2 and ABL1; involved in STX17 phosphorylation. Interacts with COPB1. Interacts with TMED9 and TMED10; the interaction is direct. Interacts with RUBCNL/PACER; promoting targeting of RUBCNL/PACER to autophagosome. Interacts with VAMP8, SNAP29, VPS39 and VPS41; these interactions are increased in the absence of TMEM39A. Interacts with IRGM; promoting STX17 recruitment to autophagosomes. Interacts with ATG8 proteins GABARAP and MAP1LC3B. Interacts with RNF115; this interaction enhances STX17 stability which in turn promotes autophagosome maturation. Interacts with RAB39A (GTP-bound); the interaction promotes autophagosome-lysosome membrane fusion driven by STX17-SNAP29-VAMP8. Interacts with RAB39B; the interaction may promote a different fonction in autophagy as compared with RAB39A. In terms of processing, phosphorylated at Tyr-156 probably by ABL1. Dephosphorylation by PTPN2; regulates exit from the endoplasmic reticulum. Detected in all tissues examined with higher expression in steroidogenic tissues including testis and adrenal gland (at protein level). Highly expressed in liver and testis. Also found in brain, heart, kidney, lung, placenta, skeletal muscle and spleen.

It is found in the endoplasmic reticulum membrane. Its subcellular location is the smooth endoplasmic reticulum membrane. The protein resides in the endoplasmic reticulum-Golgi intermediate compartment membrane. It localises to the cytoplasmic vesicle. The protein localises to the autophagosome membrane. It is found in the COPII-coated vesicle membrane. Its subcellular location is the cytoplasm. The protein resides in the cytosol. It localises to the mitochondrion membrane. The protein localises to the autolysosome membrane. In terms of biological role, SNAREs, soluble N-ethylmaleimide-sensitive factor-attachment protein receptors, are essential proteins for fusion of cellular membranes. SNAREs localized on opposing membranes assemble to form a trans-SNARE complex, an extended, parallel four alpha-helical bundle that drives membrane fusion. STX17 is a SNARE of the autophagosome involved in autophagy through the direct control of autophagosome membrane fusion with the lysosome membrane. May also play a role in the early secretory pathway where it may maintain the architecture of the endoplasmic reticulum-Golgi intermediate compartment/ERGIC and Golgi and/or regulate transport between the endoplasmic reticulum, the ERGIC and the Golgi. The protein is Syntaxin-17 of Rattus norvegicus (Rat).